The primary structure comprises 142 residues: Glia maturation factor gamma (142 aa).

At serine 2 the chain carries N-acetylserine. The ADF-H domain occupies 4 to 139; the sequence is SLVVCEVDPE…TETWLKEKLA (136 aa).

It belongs to the actin-binding proteins ADF family. GMF subfamily.

This is Glia maturation factor gamma (Gmfg) from Mus musculus (Mouse).